Consider the following 359-residue polypeptide: PWWP domain-containing protein 1 (359 aa).

Residues 1-37 (MNNARTNAKRRRLSSKQGGLSISEGKESNIPSVVEES) form a disordered region. The region spanning 52 to 114 (FGDRILVKAP…RNSVKPLLDS (63 aa)) is the PWWP domain. 2 disordered regions span residues 133-161 (AYEA…AAEE) and 204-255 (VAST…SPLN). Polar residues predominate over residues 204 to 224 (VASTSRSSTQLSDQRYPLSSN). S252 carries the post-translational modification Phosphoserine.

As to quaternary structure, interacts with set9 and histone H4K20me1. Associates with nucleosomes.

It is found in the nucleus. In terms of biological role, necessary for DNA damage checkpoint activation. Required for the association of set9 with chromatin and subsequent methylation of H4K20. Associates with H4K20me1 to increase the concentration of set9 on chromatin to perform H4K20me3. H4K20me3 is mainly enriched at heterochromatin and is required for proper heterochromatin assembly. The polypeptide is PWWP domain-containing protein 1 (pdp1) (Schizosaccharomyces pombe (strain 972 / ATCC 24843) (Fission yeast)).